Here is a 967-residue protein sequence, read N- to C-terminus: Vacuolar membrane protease (967 aa).

The Cytoplasmic segment spans residues 1 to 16; sequence MARPSLSRSNPLGFTP. A helical membrane pass occupies residues 17–37; that stretch reads WPVTVITAVVYLALVVPLLVV. Over 38–387 the chain is Vacuolar; the sequence is HHVVPSAPSS…SAFVVFELHT (350 aa). N-linked (GlcNAc...) asparagine glycosylation is found at N53 and N119. Residues H171 and D183 each coordinate Zn(2+). The active-site Proton acceptor is E217. E218, E243, and H316 together coordinate Zn(2+). Residues 388–408 traverse the membrane as a helical segment; sequence LFALSVTLLVVAPLVLLVTSI. Topologically, residues 409 to 441 are cytoplasmic; the sequence is ALNRADKMYLFRASASPEDSDGSEAVLLHGVRG. The helical transmembrane segment at 442–462 threads the bilayer; sequence FFRFPFLLVIPTAVTVGLAYL. At 463 to 472 the chain is on the vacuolar side; sequence VTKFNPYIIH. A helical transmembrane segment spans residues 473 to 493; the sequence is SSEYAVWSMMISAWVFLAWFV. Topologically, residues 494-507 are cytoplasmic; it reads SRVADFARPSAFHR. A helical membrane pass occupies residues 508–528; sequence VYTLTWLFLVEWVLLVISTVY. The Vacuolar portion of the chain corresponds to 529-532; it reads ENKY. A helical membrane pass occupies residues 533–553; that stretch reads GLAGGYFVFFAFAGTFLATWI. The Cytoplasmic segment spans residues 554 to 663; it reads SYLELFALPR…WSIHLPKWVW (110 aa). Residues 579 to 612 form a disordered region; it reads SSHGSRLGTASGEDVEDGEDEDEDDDGTTAEATE. Positions 591–606 are enriched in acidic residues; that stretch reads EDVEDGEDEDEDDDGT. The helical transmembrane segment at 664 to 684 threads the bilayer; the sequence is VLQFLLTAPLVLTFVGPLALL. The Vacuolar portion of the chain corresponds to 685-700; the sequence is LTSALRQTGQDGSSSL. The chain crosses the membrane as a helical span at residues 701-721; the sequence is FIYIAVAALTTLLFIPLLPFI. The Cytoplasmic portion of the chain corresponds to 722–727; it reads HRYTHH. Residues 728 to 748 traverse the membrane as a helical segment; it reads IPLFLLCVFAGTLIYNLVAFP. Residues 749 to 967 lie on the Vacuolar side of the membrane; it reads FSPANRLKLF…LVEGSRRFEI (219 aa). N-linked (GlcNAc...) asparagine glycosylation is found at N795 and N832.

This sequence belongs to the peptidase M28 family. Zn(2+) is required as a cofactor.

Its subcellular location is the vacuole membrane. May be involved in vacuolar sorting and osmoregulation. This is Vacuolar membrane protease from Neosartorya fischeri (strain ATCC 1020 / DSM 3700 / CBS 544.65 / FGSC A1164 / JCM 1740 / NRRL 181 / WB 181) (Aspergillus fischerianus).